Reading from the N-terminus, the 311-residue chain is 4-diphosphocytidyl-2-C-methyl-D-erythritol kinase (311 aa).

Lysine 16 is a catalytic residue. 100 to 110 (PIGAGLAGGSS) provides a ligand contact to ATP. Aspartate 142 is an active-site residue.

It belongs to the GHMP kinase family. IspE subfamily.

It catalyses the reaction 4-CDP-2-C-methyl-D-erythritol + ATP = 4-CDP-2-C-methyl-D-erythritol 2-phosphate + ADP + H(+). The protein operates within isoprenoid biosynthesis; isopentenyl diphosphate biosynthesis via DXP pathway; isopentenyl diphosphate from 1-deoxy-D-xylulose 5-phosphate: step 3/6. Its function is as follows. Catalyzes the phosphorylation of the position 2 hydroxy group of 4-diphosphocytidyl-2C-methyl-D-erythritol. This chain is 4-diphosphocytidyl-2-C-methyl-D-erythritol kinase, found in Prochlorococcus marinus (strain MIT 9301).